The following is a 282-amino-acid chain: Formamidopyrimidine-DNA glycosylase (282 aa).

Residue Pro2 is the Schiff-base intermediate with DNA of the active site. Glu3 serves as the catalytic Proton donor. The Proton donor; for beta-elimination activity role is filled by Lys60. Residues His99, Arg118, and Lys163 each contribute to the DNA site. An FPG-type zinc finger spans residues 248–282; that stretch reads WVYRRSGKNCKKCGEKILREKICGRSTHWCPNCQK. The active-site Proton donor; for delta-elimination activity is the Arg272.

It belongs to the FPG family. Monomer. Zn(2+) is required as a cofactor.

The catalysed reaction is Hydrolysis of DNA containing ring-opened 7-methylguanine residues, releasing 2,6-diamino-4-hydroxy-5-(N-methyl)formamidopyrimidine.. It carries out the reaction 2'-deoxyribonucleotide-(2'-deoxyribose 5'-phosphate)-2'-deoxyribonucleotide-DNA = a 3'-end 2'-deoxyribonucleotide-(2,3-dehydro-2,3-deoxyribose 5'-phosphate)-DNA + a 5'-end 5'-phospho-2'-deoxyribonucleoside-DNA + H(+). Involved in base excision repair of DNA damaged by oxidation or by mutagenic agents. Acts as a DNA glycosylase that recognizes and removes damaged bases. Has a preference for oxidized purines, such as 7,8-dihydro-8-oxoguanine (8-oxoG). Has AP (apurinic/apyrimidinic) lyase activity and introduces nicks in the DNA strand. Cleaves the DNA backbone by beta-delta elimination to generate a single-strand break at the site of the removed base with both 3'- and 5'-phosphates. This chain is Formamidopyrimidine-DNA glycosylase, found in Prochlorococcus marinus (strain NATL2A).